The chain runs to 733 residues: MKDFTDTISESECDDEISIVPQVELTVPKTDDPTSPTVTFRMWVLGITACVLLSFLNQFFWYRTNPLTISSVSAQIAVVPIGHLMAKVLPTRRFFEGTRWSFTMNPGPFSTKEHVLITVFANSGSGAVYATHILSAVKLYYKRRLDFLPALLVMITTQVLGFGWAGLYRKHLVEPGEMWWPSNLVQVSLFRALHEKENKSKWGISRNQFFVITLITSFSYYLLPGYLFTVLTTVSWLCWISPKSILVNQLGSGSAGLGIGSFGLDWSTIASYLGSPLASPFFASANIAAGFFLVMYVITPLCYYLDLYNAKTFPIYSGKLFVASGKEYKVTSIIDANFRLDRQAYAETGPVHMSTFFAVTYGLGFATLSASIFHVLIFNGKDLWTQTRGAFGKNKKMDIHTKIMKRNYKEVPLWWFLSIFAVNLAVIVFICIYYKTQIQLPWWGAFLACLIAIFFTPLVGVIMATTNQAPGLNIITEYIIGYAYPERPVANICFKTYGYISMSQSLTFLSDLKLGTYMKIPPRTMFMAQVVGTLVAVIAYAGTAWWLMAEIPNLCDTNLLPPGSQWTCPSDRVFFDASVIWGLVGPRRMFGDLGEYSNINWFFVGGAIAPALVYLASRLFPNKKWISDIHIPVLIGATAIMPPASAVNFTSWLVMAFVFGHFVFKYRREWWQRYNYVLSGGMDAGTGFMSVLLFLALQRSEIAIDWWGNSGEGCPVAKCPTAKGVVVHGCPVF.

Helical transmembrane passes span 42-62, 66-86, 115-135, 147-167, 209-229, 244-264, 281-301, 357-377, 413-433, 442-462, 531-551, 596-616, 644-664, and 677-697; these read MWVL…FFWY, PLTI…HLMA, VLIT…HILS, FLPA…WAGL, FFVI…YLFT, SILV…SFGL, FFAS…ITPL, FAVT…HVLI, LWWF…ICIY, WWGA…VGVI, VGTL…MAEI, YSNI…VYLA, ASAV…HFVF, and VLSG…FLAL.

Belongs to the oligopeptide OPT transporter (TC 2.A.67.1) family.

It is found in the membrane. Functionally, may be involved in the translocation of tetra- and pentapeptides across the cellular membrane in an energy-dependent manner. This Arabidopsis thaliana (Mouse-ear cress) protein is Oligopeptide transporter 8 (OPT8).